A 682-amino-acid polypeptide reads, in one-letter code: Methionine--tRNA ligase (682 aa).

Positions 15 to 25 match the 'HIGH' region motif; that stretch reads PYANGAIHLGH. Zn(2+) is bound by residues Cys-146, Cys-149, Cys-159, and Cys-162. Positions 331–335 match the 'KMSKS' region motif; the sequence is KMSKS. Lys-334 is an ATP binding site. The 103-residue stretch at 580–682 folds into the tRNA-binding domain; sequence DLAKLDMRVA…NGVTAGMQVK (103 aa).

It belongs to the class-I aminoacyl-tRNA synthetase family. MetG type 1 subfamily. Homodimer. It depends on Zn(2+) as a cofactor.

The protein resides in the cytoplasm. The catalysed reaction is tRNA(Met) + L-methionine + ATP = L-methionyl-tRNA(Met) + AMP + diphosphate. In terms of biological role, is required not only for elongation of protein synthesis but also for the initiation of all mRNA translation through initiator tRNA(fMet) aminoacylation. The protein is Methionine--tRNA ligase of Haemophilus influenzae (strain 86-028NP).